A 395-amino-acid polypeptide reads, in one-letter code: Elongation factor Tu (395 aa).

The 195-residue stretch at 10–204 (KPHVNVGTIG…AVDEYIPEPV (195 aa)) folds into the tr-type G domain. The tract at residues 19–26 (GHVDHGKT) is G1. 19–26 (GHVDHGKT) contributes to the GTP binding site. Residue Thr-26 coordinates Mg(2+). Residues 60 to 64 (GITIA) are G2. The G3 stretch occupies residues 81 to 84 (DCPG). Residues 81-85 (DCPGH) and 136-139 (NKVD) contribute to the GTP site. The segment at 136–139 (NKVD) is G4. The interval 174–176 (SAL) is G5.

The protein belongs to the TRAFAC class translation factor GTPase superfamily. Classic translation factor GTPase family. EF-Tu/EF-1A subfamily. As to quaternary structure, monomer.

Its subcellular location is the cytoplasm. It catalyses the reaction GTP + H2O = GDP + phosphate + H(+). In terms of biological role, GTP hydrolase that promotes the GTP-dependent binding of aminoacyl-tRNA to the A-site of ribosomes during protein biosynthesis. The protein is Elongation factor Tu of Exiguobacterium sp. (strain ATCC BAA-1283 / AT1b).